We begin with the raw amino-acid sequence, 380 residues long: Cytochrome b (380 aa).

4 consecutive transmembrane segments (helical) span residues 34 to 54, 78 to 99, 114 to 134, and 179 to 199; these read FGSLLGICLITQILTGLLLAA, WLIRNLHANGASFFFICIYLHI, WNTGVTLLLTLMATAFVGYVL, and FFALHFLLPFMIAGLTLIHLT. His84 and His98 together coordinate heme b. Heme b contacts are provided by His183 and His197. His202 contributes to the a ubiquinone binding site. 4 helical membrane passes run 227–247, 289–309, 321–341, and 348–368; these read LKDILGFAIMLLLLTTLALFS, LGGVLALAASVLILFLTPFLH, LSQLLFWLLVANLLILTWVGS, and FIIIGQMASITYFIIILVLFP.

This sequence belongs to the cytochrome b family. In terms of assembly, the cytochrome bc1 complex contains 11 subunits: 3 respiratory subunits (MT-CYB, CYC1 and UQCRFS1), 2 core proteins (UQCRC1 and UQCRC2) and 6 low-molecular weight proteins (UQCRH/QCR6, UQCRB/QCR7, UQCRQ/QCR8, UQCR10/QCR9, UQCR11/QCR10 and a cleavage product of UQCRFS1). This cytochrome bc1 complex then forms a dimer. The cofactor is heme b.

Its subcellular location is the mitochondrion inner membrane. Functionally, component of the ubiquinol-cytochrome c reductase complex (complex III or cytochrome b-c1 complex) that is part of the mitochondrial respiratory chain. The b-c1 complex mediates electron transfer from ubiquinol to cytochrome c. Contributes to the generation of a proton gradient across the mitochondrial membrane that is then used for ATP synthesis. The polypeptide is Cytochrome b (MT-CYB) (Pharomachrus antisianus (Crested quetzal)).